The sequence spans 342 residues: Phenylalanine--tRNA ligase alpha subunit (342 aa).

Glutamate 255 contacts Mg(2+).

It belongs to the class-II aminoacyl-tRNA synthetase family. Phe-tRNA synthetase alpha subunit type 1 subfamily. As to quaternary structure, tetramer of two alpha and two beta subunits. Mg(2+) is required as a cofactor.

It localises to the cytoplasm. The enzyme catalyses tRNA(Phe) + L-phenylalanine + ATP = L-phenylalanyl-tRNA(Phe) + AMP + diphosphate + H(+). The polypeptide is Phenylalanine--tRNA ligase alpha subunit (Pelotomaculum thermopropionicum (strain DSM 13744 / JCM 10971 / SI)).